The primary structure comprises 673 residues: DNA ligase (673 aa).

NAD(+) contacts are provided by residues 33–37 (DHQYD), 83–84 (SL), and Glu117. The active-site N6-AMP-lysine intermediate is Lys119. 4 residues coordinate NAD(+): Arg140, Glu175, Lys282, and Lys306. Zn(2+) contacts are provided by Cys400, Cys403, Cys418, and Cys424. Positions 592 to 673 (RGSSAISGKT…WVKMVEDARS (82 aa)) constitute a BRCT domain.

Belongs to the NAD-dependent DNA ligase family. LigA subfamily. Mg(2+) is required as a cofactor. The cofactor is Mn(2+).

It carries out the reaction NAD(+) + (deoxyribonucleotide)n-3'-hydroxyl + 5'-phospho-(deoxyribonucleotide)m = (deoxyribonucleotide)n+m + AMP + beta-nicotinamide D-nucleotide.. Functionally, DNA ligase that catalyzes the formation of phosphodiester linkages between 5'-phosphoryl and 3'-hydroxyl groups in double-stranded DNA using NAD as a coenzyme and as the energy source for the reaction. It is essential for DNA replication and repair of damaged DNA. The sequence is that of DNA ligase from Anaplasma marginale (strain Florida).